The sequence spans 454 residues: Lipase member H (454 aa).

The N-terminal stretch at 1–23 (MIYRKIIWGILYVTLMLFDTHRA) is a signal peptide. N-linked (GlcNAc...) asparagine glycosylation is found at asparagine 73, asparagine 137, and asparagine 151. The Nucleophile role is filled by serine 161. Residue aspartate 185 is the Charge relay system of the active site. A disulfide bridge connects residues cysteine 240 and cysteine 253. Histidine 255 functions as the Charge relay system in the catalytic mechanism. Asparagine 267 carries N-linked (GlcNAc...) asparagine glycosylation. 2 disulfide bridges follow: cysteine 277/cysteine 288 and cysteine 291/cysteine 299. Asparagine 358 carries an N-linked (GlcNAc...) asparagine glycan. Cysteine 430 and cysteine 449 are joined by a disulfide.

Belongs to the AB hydrolase superfamily. Lipase family.

The protein resides in the secreted. Its subcellular location is the cell membrane. The enzyme catalyses 1-hexadecanoyl-2-(9Z-octadecenoyl)-sn-glycero-3-phosphate + H2O = 2-(9Z-octadecenoyl)-sn-glycero-3-phosphate + hexadecanoate + H(+). Hydrolyzes specifically phosphatidic acid (PA) to produce 2-acyl lysophosphatidic acid (LPA; a potent bioactive lipid mediator) and fatty acid. Does not hydrolyze other phospholipids, like phosphatidylserine (PS), phosphatidylcholine (PC) and phosphatidylethanolamine (PE) or triacylglycerol (TG). This chain is Lipase member H (liph), found in Danio rerio (Zebrafish).